The sequence spans 192 residues: uncharacterized protein (192 aa).

Residues 29–160 enclose the Nudix hydrolase domain; it reads QRQAAVLIPV…PLDVYRRGNS (132 aa). A Nudix box motif is present at residues 67–89; it reads GAVDSTDASLIAAALREAQEEVA. Positions 83 and 87 each coordinate Mg(2+).

This sequence belongs to the Nudix hydrolase family. PCD1 subfamily. The cofactor is Mn(2+). It depends on Mg(2+) as a cofactor.

Probably mediates the hydrolysis of some nucleoside diphosphate derivatives. This is an uncharacterized protein from Salmonella dublin (strain CT_02021853).